Reading from the N-terminus, the 334-residue chain is Glycerol-3-phosphate dehydrogenase [NAD(P)+] (334 aa).

Tryptophan 13, arginine 33, and lysine 106 together coordinate NADPH. Positions 106, 137, and 139 each coordinate sn-glycerol 3-phosphate. Alanine 141 serves as a coordination point for NADPH. Positions 192, 245, 255, 256, and 257 each coordinate sn-glycerol 3-phosphate. Residue lysine 192 is the Proton acceptor of the active site. Arginine 256 is an NADPH binding site. Residues valine 280 and glutamate 282 each coordinate NADPH.

The protein belongs to the NAD-dependent glycerol-3-phosphate dehydrogenase family.

The protein resides in the cytoplasm. It catalyses the reaction sn-glycerol 3-phosphate + NAD(+) = dihydroxyacetone phosphate + NADH + H(+). It carries out the reaction sn-glycerol 3-phosphate + NADP(+) = dihydroxyacetone phosphate + NADPH + H(+). It functions in the pathway membrane lipid metabolism; glycerophospholipid metabolism. Its function is as follows. Catalyzes the reduction of the glycolytic intermediate dihydroxyacetone phosphate (DHAP) to sn-glycerol 3-phosphate (G3P), the key precursor for phospholipid synthesis. This is Glycerol-3-phosphate dehydrogenase [NAD(P)+] from Chlamydia trachomatis serovar L2b (strain UCH-1/proctitis).